The sequence spans 36 residues: APLEPVYPGDNATPEQMAQYAAEMRRYINMLTRPRY.

Tyrosine amide is present on Y36.

The protein belongs to the NPY family.

It is found in the secreted. Hormone secreted by pancreatic cells that acts as a regulator of pancreatic and gastrointestinal functions probably by signaling through the G protein-coupled receptor NPY4R2. In Chinchilla chinchilla (Short-tailed chinchilla), this protein is Pancreatic polypeptide (PPY).